Consider the following 4699-residue polypeptide: PKS-NRPS hybrid synthetase cheA (4699 aa).

Residues 1–21 show a composition bias toward acidic residues; sequence MSDNDDEWNGFSDDNGEDDGP. Disordered stretches follow at residues 1–38 and 136–165; these read MSDNDDEWNGFSDDNGEDDGPPEPGRPSQIDGQPWDVP and DGWRFHSHPDPQHSVHNHGPSLHPSAHTQH. A compositionally biased stretch (basic and acidic residues) spans 136-148; that stretch reads DGWRFHSHPDPQH. The interval 172–520 is N-terminal acylcarrier protein transacylase domain (SAT); sequence SLDTIAELSN…VQQNVEEMAK (349 aa). A disordered region spans residues 625 to 836; sequence PLPSVEDNVA…AGAPGARVTR (212 aa). Positions 674-688 are enriched in low complexity; it reads TQGSQGSQGRRTPGS. The span at 724-737 shows a compositional bias: basic residues; that stretch reads PKRRGRPPGSKNKK. The Ketosynthase family 3 (KS3) domain occupies 737–1138; that stretch reads KKDQAPAPAE…GANAHAILEA (402 aa). Positions 764 to 777 are enriched in low complexity; sequence ASAPRRGLRAAPAA. The span at 802-816 shows a compositional bias: polar residues; that stretch reads ATASTPRAQSDQGTG. Active-site for beta-ketoacyl synthase activity residues include Cys-873, His-1012, and His-1058. Positions 1250–1573 are malonyl-CoA:ACP transacylase (MAT) domain; sequence VFTGQGAQWP…VGTLLRQRDA (324 aa). The interval 1644 to 1777 is N-terminal hotdog fold; sequence NELLGTRIMD…ANLIISLGEP (134 aa). In terms of domain architecture, PKS/mFAS DH spans 1644–1947; sequence NELLGTRIMD…TKPLVPPTPS (304 aa). Residues 1645–1941 are dehydratase (DH) domain; that stretch reads ELLGTRIMDN…QLQGLHTKPL (297 aa). Catalysis depends on His-1676, which acts as the Proton acceptor; for dehydratase activity. The C-terminal hotdog fold stretch occupies residues 1794-1947; sequence MLDVPAERFY…TKPLVPPTPS (154 aa). Residue Asp-1854 is the Proton donor; for dehydratase activity of the active site. The tract at residues 2050–2241 is methyltransferase (MT) domain; it reads LNRFYIEALG…RNTGFSGADE (192 aa). Residues 2794–2967 form a ketoreductase (KR) domain region; that stretch reads TYWLVGLTGG…PAAAVNIGAV (174 aa). In terms of domain architecture, Carrier 1 spans 3076 to 3153; the sequence is DASEILEDAY…ALFELVKERA (78 aa). Position 3113 is an O-(pantetheine 4'-phosphoryl)serine (Ser-3113). The segment at 3164-3265 is disordered; it reads EQPDQVKSPR…PVASSPDAGL (102 aa). 2 stretches are compositionally biased toward polar residues: residues 3200-3209 and 3218-3233; these read SLDQGSSWDS and GHDSTILSSTAPSSPI. The segment at 3268–3696 is condensation (C) domain; the sequence is SVPLSFSQAR…PISRISKPPL (429 aa). Residues 3730–4113 form an adenylation (A) domain region; that stretch reads IQAHPDKLAL…GGLILEGRID (384 aa). In terms of domain architecture, Carrier 2 spans 4236–4316; that stretch reads EGLPAMQHLI…TMAALVASGS (81 aa). The thiolation and peptide carrier (T) domain stretch occupies residues 4241 to 4313; the sequence is MQHLIKQLWE…TLETMAALVA (73 aa). An O-(pantetheine 4'-phosphoryl)serine modification is found at Ser-4276. The interval 4367-4598 is reductase (R) domain; sequence LTGSTGFLGR…ISVHTVAAAI (232 aa).

The protein in the C-terminal section; belongs to the NRP synthetase family.

Its pathway is secondary metabolite biosynthesis. Functionally, PKS-NRPS hybrid synthetase; part of the gene cluster that mediates the biosynthesis of chaetoglobosin A which has a unique inhibitory activity against actin polymerization in mammalian cells. Chaetoglobosin A and its intermediates are involved in the morphological differentiation of C.globosum. The first step of the pathway is the synthesis of prochaetoglobosin I via condensation of one acetyl-CoA, 8 malonyl-CoA, and a L-tryptophan molecule by the PKS-NRPS hybrid synthetase cheA, followed by reduction of backbone double bond to install desired geometry by the enoyl reductase cheB. Further multiple oxidation steps performed by the cytochrome P450 monooxygenases cheE and cheG, as well as by the FAD-linked oxidoreductase cheF, lead to the formation of chaetoglobosin A. Depending on the order of action of these reductases, distinct intermediates can be identified. Within the pathway, the cytochrome P450 monooxygenase cheE catalyzes a stereospecific epoxidation on prochaetoglobosin I, cytoglobosin D, and chaetoglobosin J intermediates. The FAD-linked oxidoreductase cheF performs dehydrogenation of the C-20 hydroxyl groups in the 20-dihyrochaetoglobosin A and cytoglobosin D intermediates. Finally, the cytochrome P450 monooxygenase cheG can catalyze the stereospecific dihydroxylation of prochaetoglobosin I and prochaetoglobosin IV at C-19 and C-20, respectively. The Diels-Alderase cheD may play a role in the post-PKS-NRPS biosynthetic steps catalyzing Diels-Alder cyclization. The sequence is that of PKS-NRPS hybrid synthetase cheA from Chaetomium globosum (strain ATCC 6205 / CBS 148.51 / DSM 1962 / NBRC 6347 / NRRL 1970) (Soil fungus).